The sequence spans 334 residues: Leucine-rich repeat-containing protein 26 (334 aa).

The first 30 residues, 1–30 (MRGSFFSRLPPQLSLLLLLLLLLSWRRVWT), serve as a signal peptide directing secretion. The Extracellular segment spans residues 31–265 (QEHIGTDPSK…QCTQSLAARD (235 aa)). The 38-residue stretch at 38–75 (PSKSPVAPVCPEACSCSPGGKANCSALALPAVPAGLSW) folds into the LRRNT domain. 2 disulfide bridges follow: C47/C53 and C51/C61. LRR repeat units lie at residues 76-97 (QVRS…AFAD), 100-121 (ALLY…AFWG), 124-145 (VLQR…TFTP), 148-169 (ALSF…ILGP), and 172-194 (LLRV…LNSL). The LRRCT domain maps to 205 to 259 (NPWACSCALRPLCTWLRKHPRPTSETETLLCVSPKLQTLNLLTDFPDNAFKQCTQ). Disulfide bonds link C209–C235 and C211–C257. The helical transmembrane segment at 266 to 286 (LAVVYALGPASFLASLAICLA) threads the bilayer. Residues 287-334 (LGSVLTACGARRRRRRTTVRHLIRRQPDPEGPASLEDVGSPTTTAIQA) are Cytoplasmic-facing. A disordered region spans residues 312–334 (QPDPEGPASLEDVGSPTTTAIQA).

As to quaternary structure, interacts with KCNMA1.

It is found in the cell membrane. The protein localises to the cytoplasm. Its subcellular location is the cytoskeleton. Auxiliary protein of the large-conductance, voltage and calcium-activated potassium channel (BK alpha). Required for the conversion of BK alpha channels from a high-voltage to a low-voltage activated channel type in non-excitable cells. These are characterized by negative membrane voltages and constant low levels of calcium. The sequence is that of Leucine-rich repeat-containing protein 26 (Lrrc26) from Rattus norvegicus (Rat).